The following is a 245-amino-acid chain: Probable phosphatase Teth514_1060 (245 aa).

The Zn(2+) site is built by His-8, His-10, His-16, His-41, Glu-74, His-102, His-133, Asp-194, and His-196.

It belongs to the PHP family. It depends on Zn(2+) as a cofactor.

This is Probable phosphatase Teth514_1060 from Thermoanaerobacter sp. (strain X514).